The following is a 355-amino-acid chain: MLADRLKPFLKRYDEISESLSDPKILSDISLVTKLSKEQRSIEPVRNATLQYLEVLKNIEDNKSLINDTELGDLAKEELKNLEISQNKLEEEIKILLIPKDPNDEKNIFLEIRAGTGGDEAALFAGDLLDAYLRYAELRGYKTEIVSQSEGSAGGFKEVILLVKGDGAYSRLKFEGGTHRVQRVPETESQGRVHTSAITVAIMPEIEDSEIQINENDLRIDVMRASGHGGQCVNTTDSAVRITHIPTGLVVTNQDGKSQHKNKEAAMKVLKARLYDLQEKERKAKEQSERKDQVGTGDRSGRIRTYNYPQNRITDHRINLTLYRLDAIMAGGLFDEIIDPLIAHAQAEAINKSEI.

N5-methylglutamine is present on Gln-231. The span at Lys-280–Gln-293 shows a compositional bias: basic and acidic residues. Residues Lys-280–Asn-307 are disordered.

Belongs to the prokaryotic/mitochondrial release factor family. Methylated by PrmC. Methylation increases the termination efficiency of RF1.

It is found in the cytoplasm. Peptide chain release factor 1 directs the termination of translation in response to the peptide chain termination codons UAG and UAA. This Campylobacter hominis (strain ATCC BAA-381 / DSM 21671 / CCUG 45161 / LMG 19568 / NCTC 13146 / CH001A) protein is Peptide chain release factor 1.